Consider the following 597-residue polypeptide: Elongation factor 4 (597 aa).

The tr-type G domain occupies 2 to 184; sequence DHIRNFSIIA…SLIAKVPPPK (183 aa). GTP is bound by residues 14 to 19 and 131 to 134; these read DHGKST and NKID.

This sequence belongs to the TRAFAC class translation factor GTPase superfamily. Classic translation factor GTPase family. LepA subfamily.

It is found in the cell inner membrane. It catalyses the reaction GTP + H2O = GDP + phosphate + H(+). Its function is as follows. Required for accurate and efficient protein synthesis under certain stress conditions. May act as a fidelity factor of the translation reaction, by catalyzing a one-codon backward translocation of tRNAs on improperly translocated ribosomes. Back-translocation proceeds from a post-translocation (POST) complex to a pre-translocation (PRE) complex, thus giving elongation factor G a second chance to translocate the tRNAs correctly. Binds to ribosomes in a GTP-dependent manner. This is Elongation factor 4 from Burkholderia pseudomallei (strain 1710b).